Consider the following 147-residue polypeptide: Hemoglobin subunit gamma-1 (147 aa).

N-acetylglycine is present on G2. The Globin domain occupies 3 to 147 (HFTEEDKATI…VASALSSRYH (145 aa)). T13 is modified (phosphothreonine). Phosphoserine is present on residues S45, S51, and S53. K60 bears the N6-acetyllysine mark. H64 is a binding site for heme b. K83 bears the N6-acetyllysine mark. Position 93 (H93) interacts with heme b. C94 bears the S-nitrosocysteine mark. Position 140 is a phosphoserine (S140).

Belongs to the globin family. In terms of assembly, heterotetramer of two alpha chains and two gamma chains in fetal hemoglobin (Hb F). As to expression, red blood cells.

In terms of biological role, gamma chains make up the fetal hemoglobin F, in combination with alpha chains. This chain is Hemoglobin subunit gamma-1 (HBG1), found in Pongo pygmaeus (Bornean orangutan).